Here is a 339-residue protein sequence, read N- to C-terminus: MPRVYIGRLSYNVREKDIQRFFSGYGRLLEIDLKNGYGFVEFEDSRDADDAVYELNSKELCGERVIVEHARGPRRDRDGYSYGSRSGGGGYSSRRTSGRDKYGPPVRTEYRLIVENLSSRCSWQDLKDFMRQAGEVTYADAHKERTNEGVIEFRSYSDMKRALDKLDGTEINGRNIRLIEDKPRTSHRRSYSGSRSRSRSRRRSRSRSRRSSRSRSRSISKSRSRSRSRSKGRSRSRSKGRKSRSKSKSKPKSDRGSHSHSRSRSKDKYGKSRSRSRSRSPKENGKGDIKSKSRSRSQSRSHSPLPAPPSKARSMSPPPKRASRSRSRSRSRSRSSSRD.

The region spanning 2–72 is the RRM 1 domain; sequence PRVYIGRLSY…ERVIVEHARG (71 aa). Phosphoserine occurs at positions 45, 81, and 84. Residues 75 to 103 form a disordered region; that stretch reads RDRDGYSYGSRSGGGGYSSRRTSGRDKYG. The region spanning 110–183 is the RRM 2 domain; the sequence is YRLIVENLSS…RNIRLIEDKP (74 aa). Residue Lys-165 is modified to N6-acetyllysine. The segment at 176 to 339 is disordered; it reads IRLIEDKPRT…RSRSRSSSRD (164 aa). Lys-182 is covalently cross-linked (Glycyl lysine isopeptide (Lys-Gly) (interchain with G-Cter in SUMO2)). Residues 185 to 250 are compositionally biased toward basic residues; the sequence is TSHRRSYSGS…RKSRSKSKSK (66 aa). Over residues 280-291 the composition is skewed to basic and acidic residues; the sequence is SPKENGKGDIKS. Phosphoserine is present on residues Ser-297 and Ser-299. The residue at position 303 (Ser-303) is a Phosphoserine; by DYRK1A. 2 positions are modified to phosphoserine: Ser-314 and Ser-316. Over residues 321 to 339 the composition is skewed to basic residues; the sequence is RASRSRSRSRSRSRSSSRD.

It belongs to the splicing factor SR family. In terms of assembly, binds SREK1/SFRS12. Interacts with DYRK1A. Interacts with RBMY; the interaction inhibits SRSF6 pre-mRNA splicing. Post-translationally, extensively phosphorylated on serine residues in the RS domain. Phosphorylated by DYRK1A, probably in the RS domain. Phosphorylation by DYRK1A modulates alternative splice site selection and inhibits the expression of MAPT/Tau exon 10.

The protein resides in the nucleus. The protein localises to the nucleus speckle. Functionally, plays a role in constitutive splicing and modulates the selection of alternative splice sites. Plays a role in the alternative splicing of MAPT/Tau exon 10. Binds to alternative exons of TNC pre-mRNA and promotes the expression of alternatively spliced TNC. Plays a role in wound healing and in the regulation of keratinocyte differentiation and proliferation via its role in alternative splicing. This chain is Serine/arginine-rich splicing factor 6 (Srsf6), found in Mus musculus (Mouse).